Consider the following 90-residue polypeptide: Putative sodium channel toxin Ts28 (90 aa).

An N-terminal signal peptide occupies residues 1-23 (MKISLVTWLITALCLMEIEEIDG). An LCN-type CS-alpha/beta domain is found at 26–86 (PGNYPVDFQG…FWDVMKKQCD (61 aa)). 3 disulfides stabilise this stretch: cysteine 40–cysteine 60, cysteine 46–cysteine 65, and cysteine 50–cysteine 67.

Belongs to the long (3 C-C) scorpion toxin superfamily. Monomer (edited version) and heterodimer (non-edited version) of this alpha chain and a beta chain (AC P0CI43). Expressed by the venom gland.

Its subcellular location is the secreted. The edited BmKBTx-like may modulate voltage-gated sodium channels (Nav). Functionally, the non-edited form is able to form a heterodimer. In orthologs, a heterodimer with LVP beta-chain induces lipolysis in rat adipocytes, which is mediated through the beta-2 adrenergic receptor pathway (ADRB2). Since no LVP beta-chains have been identified in the venom of this scorpion, it is possible that this protein is not involved in a lipolysis process. This chain is Putative sodium channel toxin Ts28, found in Tityus serrulatus (Brazilian scorpion).